The primary structure comprises 108 residues: Inner membrane protein H108R (108 aa).

A helical membrane pass occupies residues 10–32 (LIVIITILITTRELSTTMLIVSL). The segment covering 49 to 64 (ENNTFSMPQKNSFSES) has biased composition (polar residues). Residues 49 to 69 (ENNTFSMPQKNSFSESYNKDK) form a disordered region. N-linked (GlcNAc...) asparagine; by host glycosylation is present at asparagine 50.

Belongs to the asfivirus H108R family.

The protein resides in the virion membrane. The chain is Inner membrane protein H108R from Ornithodoros (relapsing fever ticks).